The primary structure comprises 429 residues: MTAPLKAIDGSADLPALMNDLASRARAAARVLALAPAAQKNRALEAMERLIRARVDTIIAANAEDVVEAKAAGITSSFLDRLTLTPARVAAMADGIAAVREVADPIGIVTESWQRPNGMTIERVRVPLGVIGVIFESRPNVAADAGVLCLKSGNAVILRGGSDSFRSCRAIHECLVEGLREAGLPDAAITLVPTRDRAAVGLLLSGLNGGVDVIVPRGGKNLVARVEAEARVPVFAHLEGVNHVYVDGAADLEMAKSIVLNAKMRRTGVCGAAETLLIDRASQDKIKPLVDTLINAGCEVRGDDAVRAADARVKPASNEDWDTEYLDAVIAAKVVDGVEGAIAHIQAHGSHHTDAIVTADVAAADKFLNEVDSAIVLHNASTQFADGGEFGFGAEIGIATGKFHARGPVGVEQLTSFKYRIHGTGQTRP.

It belongs to the gamma-glutamyl phosphate reductase family.

It localises to the cytoplasm. The enzyme catalyses L-glutamate 5-semialdehyde + phosphate + NADP(+) = L-glutamyl 5-phosphate + NADPH + H(+). It functions in the pathway amino-acid biosynthesis; L-proline biosynthesis; L-glutamate 5-semialdehyde from L-glutamate: step 2/2. In terms of biological role, catalyzes the NADPH-dependent reduction of L-glutamate 5-phosphate into L-glutamate 5-semialdehyde and phosphate. The product spontaneously undergoes cyclization to form 1-pyrroline-5-carboxylate. This Bradyrhizobium sp. (strain BTAi1 / ATCC BAA-1182) protein is Gamma-glutamyl phosphate reductase.